Here is a 356-residue protein sequence, read N- to C-terminus: Tyrosine recombinase XerS (356 aa).

The 106-residue stretch at 16–121 (TMPWYILEYY…ALSSLYKYLT (106 aa)) folds into the Core-binding (CB) domain. In terms of domain architecture, Tyr recombinase spans 169–354 (EFLQYIDREY…VNDEQKNALN (186 aa)). Catalysis depends on residues Arg-210, Lys-234, His-306, Arg-309, and His-332. Tyr-341 (O-(3'-phospho-DNA)-tyrosine intermediate) is an active-site residue.

It belongs to the 'phage' integrase family. XerS subfamily.

It is found in the cytoplasm. Its activity is regulated as follows. FtsK is required for recombination. Its function is as follows. Site-specific tyrosine recombinase, which acts by catalyzing the cutting and rejoining of the recombining DNA molecules. Essential to convert dimers of the bacterial chromosome into monomers to permit their segregation at cell division. This Streptococcus gordonii (strain Challis / ATCC 35105 / BCRC 15272 / CH1 / DL1 / V288) protein is Tyrosine recombinase XerS.